A 653-amino-acid polypeptide reads, in one-letter code: Alpha-L-iduronidase (653 aa).

A signal peptide spans 1–27 (MRPLRPRAALLALLASLLAAPPVAPAE). Alpha-D-mannopyranose contacts are provided by Pro54, Leu56, and His58. His91 lines the alpha-L-iduronate pocket. Residue Asn110 is glycosylated (N-linked (GlcNAc...) asparagine). Alpha-L-iduronate is bound by residues Asn181 and Glu182. The active-site Proton donor is the Glu182. Asn190 carries an N-linked (GlcNAc...) asparagine glycan. Alpha-L-iduronate-binding residues include Lys264, Glu299, and Gly305. Residue Glu299 is the Nucleophile of the active site. Trp306 is a binding site for alpha-D-mannopyranose. N-linked (GlcNAc...) asparagine glycosylation is present at Asn336. Alpha-L-iduronate contacts are provided by Asp349 and Arg363. N-linked (GlcNAc...) asparagine glycosylation is found at Asn372, Asn415, and Asn451. Alpha-D-mannopyranose-binding residues include Arg488 and Arg492. Arg492 provides a ligand contact to beta-D-mannose. A disulfide bond links Cys541 and Cys577.

This sequence belongs to the glycosyl hydrolase 39 family. In terms of assembly, monomer. In terms of processing, N-glycosylation at Asn-372 contributes to substrate binding and is required for full enzymatic activity. Ubiquitous.

The protein resides in the lysosome. It carries out the reaction Hydrolysis of unsulfated alpha-L-iduronosidic linkages in dermatan sulfate.. This is Alpha-L-iduronidase (IDUA) from Homo sapiens (Human).